The following is a 229-amino-acid chain: Urease accessory protein UreF (229 aa).

Belongs to the UreF family. As to quaternary structure, ureD, UreF and UreG form a complex that acts as a GTP-hydrolysis-dependent molecular chaperone, activating the urease apoprotein by helping to assemble the nickel containing metallocenter of UreC. The UreE protein probably delivers the nickel.

The protein localises to the cytoplasm. Required for maturation of urease via the functional incorporation of the urease nickel metallocenter. In Staphylococcus aureus (strain JH1), this protein is Urease accessory protein UreF.